We begin with the raw amino-acid sequence, 269 residues long: Tryptophan synthase alpha chain (269 aa).

Active-site proton acceptor residues include Glu-49 and Asp-60.

It belongs to the TrpA family. As to quaternary structure, tetramer of two alpha and two beta chains.

The catalysed reaction is (1S,2R)-1-C-(indol-3-yl)glycerol 3-phosphate + L-serine = D-glyceraldehyde 3-phosphate + L-tryptophan + H2O. It functions in the pathway amino-acid biosynthesis; L-tryptophan biosynthesis; L-tryptophan from chorismate: step 5/5. Functionally, the alpha subunit is responsible for the aldol cleavage of indoleglycerol phosphate to indole and glyceraldehyde 3-phosphate. The protein is Tryptophan synthase alpha chain of Pseudomonas putida (strain ATCC 47054 / DSM 6125 / CFBP 8728 / NCIMB 11950 / KT2440).